We begin with the raw amino-acid sequence, 269 residues long: uncharacterized protein (269 aa).

This is an uncharacterized protein from Schizosaccharomyces pombe (strain 972 / ATCC 24843) (Fission yeast).